The following is a 473-amino-acid chain: MLQVYNTLTRNKETFKPLKEGEVSIYACGPTVYNMPHIGNYRTFLLADTVVRTLQYLGYKVKLVMNITDIDDKTIRDSKAAGMSLKDFTDKYSAEFFKGLDMLNIKRASAYPRATENVDGMIELAQKLIEKGLAYEKGGSVYYRISGFPDYGKLSKLDFDSIRIGASVDVDEYDKDNPRDFALLKASAPEEIERSIYYESPWGKIRPGWHIECSVMAMNSFGPTLDVHIGGVDLIFPHHENEIAQSEGATGIPFVRHWIHGEHLIVEGEKMSKSKGNVFTLPEIVEMYGGEVVRFMFLSVHYRKKLDYSETFAENAKNNYLKLKETLDNLEFALKNVEDEPGPGDLETLKTLPELENRFREALEDDFNTPKAITVFRELSRTANVYLETGKNMQVLEEIHALYKRFSDTLGIFAKAGGEEVPGEVVRLVEEREEARKIKDWKTSDAIREKIKSLGYIVQDTKEGPKIKKSEES.

Cys-28 lines the Zn(2+) pocket. Positions 30–40 match the 'HIGH' region motif; the sequence is PTVYNMPHIGN. Zn(2+) is bound by residues Cys-213, His-238, and Glu-242. Positions 270 to 274 match the 'KMSKS' region motif; the sequence is KMSKS. Lys-273 is a binding site for ATP.

It belongs to the class-I aminoacyl-tRNA synthetase family. Zn(2+) serves as cofactor.

The protein resides in the cytoplasm. It catalyses the reaction tRNA(Cys) + L-cysteine + ATP = L-cysteinyl-tRNA(Cys) + AMP + diphosphate. This Methanosarcina mazei (strain ATCC BAA-159 / DSM 3647 / Goe1 / Go1 / JCM 11833 / OCM 88) (Methanosarcina frisia) protein is Cysteine--tRNA ligase.